The chain runs to 183 residues: Archaemetzincin (183 aa).

Position 131 (histidine 131) interacts with Zn(2+). Glutamate 132 (proton acceptor) is an active-site residue. Zn(2+) contacts are provided by histidine 135, histidine 141, cysteine 142, cysteine 147, cysteine 166, and cysteine 169.

Belongs to the peptidase M54 family. As to quaternary structure, monomer. Zn(2+) is required as a cofactor.

Its function is as follows. Probable zinc metalloprotease whose natural substrate is unknown. The sequence is that of Archaemetzincin from Saccharolobus islandicus (strain Y.N.15.51 / Yellowstone #2) (Sulfolobus islandicus).